The chain runs to 178 residues: Bifunctional protein PyrR (178 aa).

Substrate-binding positions include 42 to 43 (TR), arginine 83, 103 to 111 (DDVIYKGRT), arginine 136, and valine 160. The PRPP-binding motif lies at 99 to 111 (VVLVDDVIYKGRT).

This sequence belongs to the purine/pyrimidine phosphoribosyltransferase family. PyrR subfamily.

It catalyses the reaction UMP + diphosphate = 5-phospho-alpha-D-ribose 1-diphosphate + uracil. Its function is as follows. Regulates the transcription of the pyrimidine nucleotide (pyr) operon in response to exogenous pyrimidines. In terms of biological role, also displays a weak uracil phosphoribosyltransferase activity which is not physiologically significant. The sequence is that of Bifunctional protein PyrR from Synechocystis sp. (strain ATCC 27184 / PCC 6803 / Kazusa).